The primary structure comprises 345 residues: Protein-glutamate methylesterase/protein-glutamine glutaminase 1 (345 aa).

The 116-residue stretch at 8–123 folds into the Response regulatory domain; sequence SVLVIDDSAH…FEAMEALRVE (116 aa). 4-aspartylphosphate is present on Asp-59. Residues 151-344 form the CheB-type methylesterase domain; sequence AGEPPLVVAV…PALAALARRR (194 aa). Catalysis depends on residues Ser-163, His-190, and Asp-286.

Belongs to the CheB family. Post-translationally, phosphorylated by CheA. Phosphorylation of the N-terminal regulatory domain activates the methylesterase activity.

Its subcellular location is the cytoplasm. The enzyme catalyses [protein]-L-glutamate 5-O-methyl ester + H2O = L-glutamyl-[protein] + methanol + H(+). It catalyses the reaction L-glutaminyl-[protein] + H2O = L-glutamyl-[protein] + NH4(+). Its function is as follows. Involved in chemotaxis. Part of a chemotaxis signal transduction system that modulates chemotaxis in response to various stimuli. Catalyzes the demethylation of specific methylglutamate residues introduced into the chemoreceptors (methyl-accepting chemotaxis proteins or MCP) by CheR. Also mediates the irreversible deamidation of specific glutamine residues to glutamic acid. This is Protein-glutamate methylesterase/protein-glutamine glutaminase 1 from Myxococcus xanthus (strain DK1622).